Reading from the N-terminus, the 203-residue chain is Holliday junction branch migration complex subunit RuvA (203 aa).

The interval 1–64 (MIGRLRGIIL…EDAQLLYGFN (64 aa)) is domain I. Residues 65–142 (NKQERTLFKE…KGLHGDLFTP (78 aa)) are domain II. The flexible linker stretch occupies residues 143–154 (AADLVLTSPAGP). Residues 155–203 (TADDAEQEAVAALVALGYKPQEASRMVSKIARPDANSETLIREALRAAL) are domain III.

Belongs to the RuvA family. Homotetramer. Forms an RuvA(8)-RuvB(12)-Holliday junction (HJ) complex. HJ DNA is sandwiched between 2 RuvA tetramers; dsDNA enters through RuvA and exits via RuvB. An RuvB hexamer assembles on each DNA strand where it exits the tetramer. Each RuvB hexamer is contacted by two RuvA subunits (via domain III) on 2 adjacent RuvB subunits; this complex drives branch migration. In the full resolvosome a probable DNA-RuvA(4)-RuvB(12)-RuvC(2) complex forms which resolves the HJ.

The protein resides in the cytoplasm. Functionally, the RuvA-RuvB-RuvC complex processes Holliday junction (HJ) DNA during genetic recombination and DNA repair, while the RuvA-RuvB complex plays an important role in the rescue of blocked DNA replication forks via replication fork reversal (RFR). RuvA specifically binds to HJ cruciform DNA, conferring on it an open structure. The RuvB hexamer acts as an ATP-dependent pump, pulling dsDNA into and through the RuvAB complex. HJ branch migration allows RuvC to scan DNA until it finds its consensus sequence, where it cleaves and resolves the cruciform DNA. The chain is Holliday junction branch migration complex subunit RuvA from Klebsiella pneumoniae (strain 342).